A 321-amino-acid chain; its full sequence is Ribosomal RNA small subunit methyltransferase H (321 aa).

S-adenosyl-L-methionine contacts are provided by residues 34–36, Asp-54, Phe-80, Asp-102, and Gln-109; that span reads GGH.

This sequence belongs to the methyltransferase superfamily. RsmH family.

It is found in the cytoplasm. The enzyme catalyses cytidine(1402) in 16S rRNA + S-adenosyl-L-methionine = N(4)-methylcytidine(1402) in 16S rRNA + S-adenosyl-L-homocysteine + H(+). In terms of biological role, specifically methylates the N4 position of cytidine in position 1402 (C1402) of 16S rRNA. The protein is Ribosomal RNA small subunit methyltransferase H of Blochmanniella floridana.